A 366-amino-acid polypeptide reads, in one-letter code: tRNA-specific 2-thiouridylase MnmA (366 aa).

ATP contacts are provided by residues Ala6 to Ser13 and Leu32. Cys101 functions as the Nucleophile in the catalytic mechanism. The cysteines at positions 101 and 199 are disulfide-linked. Residue Gly125 coordinates ATP. The interval Lys148–Gln150 is interaction with tRNA. The active-site Cysteine persulfide intermediate is Cys199.

It belongs to the MnmA/TRMU family.

It localises to the cytoplasm. It catalyses the reaction S-sulfanyl-L-cysteinyl-[protein] + uridine(34) in tRNA + AH2 + ATP = 2-thiouridine(34) in tRNA + L-cysteinyl-[protein] + A + AMP + diphosphate + H(+). Its function is as follows. Catalyzes the 2-thiolation of uridine at the wobble position (U34) of tRNA, leading to the formation of s(2)U34. This Leifsonia xyli subsp. xyli (strain CTCB07) protein is tRNA-specific 2-thiouridylase MnmA.